The sequence spans 280 residues: Mesaconyl-C(4)-CoA hydratase (280 aa).

Belongs to the HTD2 family. As to quaternary structure, homodimer.

The enzyme catalyses (3S)-citramalyl-CoA = 3-methylfumaryl-CoA + H2O. Inhibited by 3-methylfumaryl-CoA concentrations above 0.3 mM. Its function is as follows. Involved in the glyoxylate assimilation cycle used to regenerate acetyl-CoA and produce pyruvate as universal precursor for biosynthesis. Catalyzes the hydration of 3-methylfumaryl-CoA (mesaconyl-C4-CoA) to (3S)-citramalyl-CoA. In Chloroflexus aurantiacus (strain ATCC 29366 / DSM 635 / J-10-fl), this protein is Mesaconyl-C(4)-CoA hydratase (meh).